The sequence spans 325 residues: Gibberellin 20-oxidase-like protein (325 aa).

In terms of domain architecture, Fe2OG dioxygenase spans 152-266; the sequence is CHGYFRINNY…RFSLAFFWCF (115 aa). The Fe cation site is built by His-186, Asp-188, and His-244. Arg-257 is a 2-oxoglutarate binding site.

Belongs to the iron/ascorbate-dependent oxidoreductase family. GA20OX subfamily. Requires Fe(2+) as cofactor. In terms of tissue distribution, highly expressed in elongation zone of lateral roots.

Its function is as follows. Negative regulator of root hair growth. This is Gibberellin 20-oxidase-like protein from Arabidopsis thaliana (Mouse-ear cress).